The primary structure comprises 32 residues: NSWENNKNIIFSGSLIWVFLLIIVGFLNYLVV.

The helical transmembrane segment at 9–29 (IIFSGSLIWVFLLIIVGFLNY) threads the bilayer.

This sequence belongs to the PsbZ family. PSII is composed of 1 copy each of membrane proteins PsbA, PsbB, PsbC, PsbD, PsbE, PsbF, PsbH, PsbI, PsbJ, PsbK, PsbL, PsbM, PsbT, PsbY, PsbZ, Psb30/Ycf12, at least 3 peripheral proteins of the oxygen-evolving complex and a large number of cofactors. It forms dimeric complexes.

The protein resides in the plastid. It is found in the chloroplast thylakoid membrane. Functionally, may control the interaction of photosystem II (PSII) cores with the light-harvesting antenna, regulates electron flow through the 2 photosystem reaction centers. PSII is a light-driven water plastoquinone oxidoreductase, using light energy to abstract electrons from H(2)O, generating a proton gradient subsequently used for ATP formation. The sequence is that of Photosystem II reaction center protein Z from Euglena myxocylindracea.